Consider the following 337-residue polypeptide: MPKINRPRRGSLAFSPRKRAQSPIPKYKSWPEHSGAPALLGFAGYKVGMTHVLMVDDHKDSPTEGKEIMVPVTIIEIPTMKVAALRVYTKDTYGKHALTEIWAEPLDSQLSRRVTSPKNYDSTAAKKKYSDALAAGLVAEIYALAYTQPATMSGVPKKVPDLMEIKVAGGDIAKQYEYAFGLLGKEIRLSNVIETGAYADITAITIGKGTQGPVKRWGVTLRKRKHSVGGKERHVGTLGPWNPHHVRWEVPQSGQMGYQQRTEFNKRILKIGENGAEITPAGGFLNYGVIRNAYVVIKGSIPGPAKRLIRIRPAIRQGEHVVRSPAIQFVSVQSKQG.

The disordered stretch occupies residues 1–29 (MPKINRPRRGSLAFSPRKRAQSPIPKYKS).

The protein belongs to the universal ribosomal protein uL3 family. As to quaternary structure, part of the 50S ribosomal subunit. Forms a cluster with proteins L14 and L24e.

In terms of biological role, one of the primary rRNA binding proteins, it binds directly near the 3'-end of the 23S rRNA, where it nucleates assembly of the 50S subunit. The sequence is that of Large ribosomal subunit protein uL3 from Methanoregula boonei (strain DSM 21154 / JCM 14090 / 6A8).